Here is a 267-residue protein sequence, read N- to C-terminus: Undecaprenyl-diphosphatase (267 aa).

8 helical membrane-spanning segments follow: residues 5–25 (TIVA…PVSS), 45–65 (FEVL…AGRL), 82–102 (ILAV…AHRI), 108–128 (FETP…LLFV), 143–163 (FPLP…IPGV), 183–203 (AAEF…VYDL), 213–233 (AATG…VVVV), and 243–263 (YGYG…LLAL).

The protein belongs to the UppP family.

The protein localises to the cell inner membrane. It carries out the reaction di-trans,octa-cis-undecaprenyl diphosphate + H2O = di-trans,octa-cis-undecaprenyl phosphate + phosphate + H(+). Its function is as follows. Catalyzes the dephosphorylation of undecaprenyl diphosphate (UPP). Confers resistance to bacitracin. The sequence is that of Undecaprenyl-diphosphatase from Paracoccus denitrificans (strain Pd 1222).